Here is a 218-residue protein sequence, read N- to C-terminus: Ribosomal RNA small subunit methyltransferase G (218 aa).

S-adenosyl-L-methionine-binding positions include Gly86, Leu91, Ala137–Glu138, and Arg153.

Belongs to the methyltransferase superfamily. RNA methyltransferase RsmG family.

The protein resides in the cytoplasm. The catalysed reaction is guanosine(527) in 16S rRNA + S-adenosyl-L-methionine = N(7)-methylguanosine(527) in 16S rRNA + S-adenosyl-L-homocysteine. In terms of biological role, specifically methylates the N7 position of guanine in position 527 of 16S rRNA. This Nitratidesulfovibrio vulgaris (strain ATCC 29579 / DSM 644 / CCUG 34227 / NCIMB 8303 / VKM B-1760 / Hildenborough) (Desulfovibrio vulgaris) protein is Ribosomal RNA small subunit methyltransferase G.